We begin with the raw amino-acid sequence, 271 residues long: Aminoglycoside N(3)-acetyltransferase III (271 aa).

Positions 31, 32, 33, 34, and 35 each coordinate CoA. Tyr-64, Asp-72, and Glu-102 together coordinate a 2-deoxystreptamine antibiotic. Residues Ser-104, Val-105, and Phe-109 each contribute to the CoA site. A 2-deoxystreptamine antibiotic contacts are provided by Glu-123, Tyr-146, and Asp-170. Positions 171 and 173 each coordinate CoA. A 2-deoxystreptamine antibiotic-binding residues include His-176, Thr-212, Gly-213, and Phe-221.

This sequence belongs to the antibiotic N-acetyltransferase family. Homodimer.

It catalyses the reaction a 2-deoxystreptamine antibiotic + acetyl-CoA = an N(3)-acetyl-2-deoxystreptamine antibiotic + CoA + H(+). Functionally, resistance to antibiotics containing the 2-deoxy-streptamine ring including dibekacin, gentamicin, kanamycin, sisomicin, tobramycin and neomycin, but not to amikacin or netilmicin. Acetylates a broad range of both 4,5- and 4,6-disubstituted aminoglycosides, including neomycin, paromomycin, ribostamycin, sisomicin, gentamicin, tobramycin and kanamycin, with no preference of one disubstitution over the other. Acetylates sisomicin and kanamycin most and least efficiently, respectively. Does not modify plazomicin. This is Aminoglycoside N(3)-acetyltransferase III from Pseudomonas aeruginosa.